We begin with the raw amino-acid sequence, 369 residues long: Beta-1,4-galactosyltransferase 2 (369 aa).

The Cytoplasmic segment spans residues Met1 to Ala15. Residues Val16–Ala36 form a helical; Signal-anchor for type II membrane protein membrane-spanning segment. Over Gln37 to Gly369 the chain is Lumenal. Positions Ala58 to Ser73 are enriched in polar residues. Residues Ala58 to Val90 form a disordered region. Residues Asn63 and Asn68 are each glycosylated (N-linked (GlcNAc...) asparagine). Residues Cys94 and Cys136 are joined by a disulfide bond. UDP-alpha-D-galactose contacts are provided by residues Pro147–Arg151, Phe186–Arg188, Val214–Asp215, and Trp275. An intrachain disulfide couples Cys208 to Cys227. Position 215 (Asp215) interacts with Mn(2+). An N-acetyl-D-glucosamine-binding site is contributed by Gly277–Asp280. His308 lines the Mn(2+) pocket. His308–Arg310 lines the UDP-alpha-D-galactose pocket. N-acetyl-D-glucosamine is bound at residue Arg320. Asn354 carries N-linked (GlcNAc...) asparagine glycosylation.

It belongs to the glycosyltransferase 7 family. Mn(2+) serves as cofactor.

The protein resides in the golgi apparatus. Its subcellular location is the golgi stack membrane. It carries out the reaction D-glucose + UDP-alpha-D-galactose = lactose + UDP + H(+). It catalyses the reaction an N-acetyl-beta-D-glucosaminyl derivative + UDP-alpha-D-galactose = a beta-D-galactosyl-(1-&gt;4)-N-acetyl-beta-D-glucosaminyl derivative + UDP + H(+). The enzyme catalyses N-acetyl-D-glucosamine + UDP-alpha-D-galactose = beta-D-galactosyl-(1-&gt;4)-N-acetyl-D-glucosamine + UDP + H(+). Its pathway is protein modification; protein glycosylation. Responsible for the synthesis of complex-type N-linked oligosaccharides in many glycoproteins as well as the carbohydrate moieties of glycolipids. Can produce lactose. The polypeptide is Beta-1,4-galactosyltransferase 2 (Mus musculus (Mouse)).